The primary structure comprises 93 residues: Small ribosomal subunit protein uS19 (93 aa).

The protein belongs to the universal ribosomal protein uS19 family.

In terms of biological role, protein S19 forms a complex with S13 that binds strongly to the 16S ribosomal RNA. The protein is Small ribosomal subunit protein uS19 of Ehrlichia chaffeensis (strain ATCC CRL-10679 / Arkansas).